The sequence spans 689 residues: Elongation factor G (689 aa).

The 275-residue stretch at 8–282 folds into the tr-type G domain; the sequence is LNTRNIGIMA…AVVDYLPSPL (275 aa). GTP is bound by residues 17–24, 81–85, and 135–138; these read AHIDAGKT, DTPGH, and NKMD.

The protein belongs to the TRAFAC class translation factor GTPase superfamily. Classic translation factor GTPase family. EF-G/EF-2 subfamily.

It localises to the cytoplasm. Catalyzes the GTP-dependent ribosomal translocation step during translation elongation. During this step, the ribosome changes from the pre-translocational (PRE) to the post-translocational (POST) state as the newly formed A-site-bound peptidyl-tRNA and P-site-bound deacylated tRNA move to the P and E sites, respectively. Catalyzes the coordinated movement of the two tRNA molecules, the mRNA and conformational changes in the ribosome. This is Elongation factor G from Mycoplasma mycoides subsp. mycoides SC (strain CCUG 32753 / NCTC 10114 / PG1).